Reading from the N-terminus, the 236-residue chain is Large ribosomal subunit protein uL1 (236 aa).

The protein belongs to the universal ribosomal protein uL1 family. Part of the 50S ribosomal subunit.

Functionally, binds directly to 23S rRNA. The L1 stalk is quite mobile in the ribosome, and is involved in E site tRNA release. Its function is as follows. Protein L1 is also a translational repressor protein, it controls the translation of the L11 operon by binding to its mRNA. This Protochlamydia amoebophila (strain UWE25) protein is Large ribosomal subunit protein uL1.